The primary structure comprises 370 residues: tRNA (guanine(9)-/adenine(9)-N1)-methyltransferase (370 aa).

The SAM-dependent MTase TRM10-type domain occupies 87 to 292 (TPEELREKLP…KELPKRATRY (206 aa)).

Belongs to the class IV-like SAM-binding methyltransferase superfamily. TRM10 family.

It is found in the cytoplasm. It catalyses the reaction adenosine(9) in tRNA + S-adenosyl-L-methionine = N(1)-methyladenosine(9) in tRNA + S-adenosyl-L-homocysteine + H(+). The enzyme catalyses guanosine(9) in tRNA + S-adenosyl-L-methionine = N(1)-methylguanosine(9) in tRNA + S-adenosyl-L-homocysteine + H(+). Functionally, catalyzes the S-adenosyl-L-methionine-dependent formation of either N(1)-methyladenine or N(1)-methylguanine at position 9 (m1A9 or m1G9) in tRNA. This Thermococcus kodakarensis (strain ATCC BAA-918 / JCM 12380 / KOD1) (Pyrococcus kodakaraensis (strain KOD1)) protein is tRNA (guanine(9)-/adenine(9)-N1)-methyltransferase.